Reading from the N-terminus, the 275-residue chain is MSGEGNLGKDHEEENEAPLPGFRFHPTDEELLGYYLRRKVENKTIKLELIKQIDIYKYDPWDLPRVSSVGEKEWYFFCMRGRKYRNSVRPNRVTGSGFWKATGIDKPVYSNLDCVGLKKSLVYYLGSAGKGTKTDWMMHEFRLPSTTKTDSPAQQAEVWTLCRIFKRVTSQRNPTILPPNRKPVITLTDTCSKTSSLDSDHTSHRTVDSMSHEPPLPQPQNPYWNQHIVGFNQPTYTGNDNNLLMSFWNGNGGDFIGDSASWDELRSVIDGNTKP.

Positions 1-24 (MSGEGNLGKDHEEENEAPLPGFRF) are disordered. In terms of domain architecture, NAC spans 18-167 (PLPGFRFHPT…VWTLCRIFKR (150 aa)). A DNA-binding region spans residues 115 to 173 (VGLKKSLVYYLGSAGKGTKTDWMMHEFRLPSTTKTDSPAQQAEVWTLCRIFKRVTSQRN). Positions 191–219 (CSKTSSLDSDHTSHRTVDSMSHEPPLPQP) are disordered. Residues 198-211 (DSDHTSHRTVDSMS) show a composition bias toward basic and acidic residues.

Expressed in roots, root caps, cotyledons, tips and margin of young leaves, senescent regions of fully expanded leaves and floral tissues, including old sepals, petals, staments, mature anthers and pollen grains. Not detected in the abscission zone of open flowers, emerging lateral roots and root meristematic zones.

Its subcellular location is the nucleus. Its function is as follows. Transcription factor that binds to the 5'- RRYGCCGT-3' consensus core sequence. Central longevity regulator. Negative regulator of leaf senescence. Modulates cellular H(2)O(2) levels and enhances tolerance to various abiotic stresses through the regulation of DREB2A. In Arabidopsis thaliana (Mouse-ear cress), this protein is Transcription factor JUNGBRUNNEN 1 (JUB1).